A 255-amino-acid polypeptide reads, in one-letter code: Phosphate import ATP-binding protein PstB (255 aa).

The ABC transporter domain maps to 9-250 (IAVQNLNFYY…PKIQRTEDYI (242 aa)). ATP is bound at residue 41–48 (GPSGCGKS).

It belongs to the ABC transporter superfamily. Phosphate importer (TC 3.A.1.7) family. As to quaternary structure, the complex is composed of two ATP-binding proteins (PstB), two transmembrane proteins (PstC and PstA) and a solute-binding protein (PstS).

It is found in the cell inner membrane. It carries out the reaction phosphate(out) + ATP + H2O = ADP + 2 phosphate(in) + H(+). Part of the ABC transporter complex PstSACB involved in phosphate import. Responsible for energy coupling to the transport system. This chain is Phosphate import ATP-binding protein PstB, found in Haemophilus influenzae (strain 86-028NP).